A 293-amino-acid chain; its full sequence is Dehydrodolichyl diphosphate synthase complex subunit NUS1 (293 aa).

3 helical membrane passes run 1–23, 35–56, and 117–135; these read MTGL…RTLT, WIWR…GFTL, and IASL…ISVY. N-linked (GlcNAc...) asparagine glycans are attached at residues N144 and N271. Positions 290 to 292 match the RXG motif; crucial for prenyltransferase activity motif; the sequence is RLG. 2 residues coordinate isopentenyl diphosphate: L291 and G292.

The protein belongs to the UPP synthase family. The active dehydrodolichyl diphosphate synthase complex is a heterotetramer composed of a dimer of heterodimer of DHDDS and NUS1. Interacts with NPC2. Mg(2+) is required as a cofactor.

Its subcellular location is the endoplasmic reticulum membrane. The catalysed reaction is n isopentenyl diphosphate + (2E,6E)-farnesyl diphosphate = a di-trans,poly-cis-polyprenyl diphosphate + n diphosphate. It participates in protein modification; protein glycosylation. The protein operates within lipid metabolism. Its activity is regulated as follows. Activated by phospholipids including cardiolipin, phosphatidylcholine, phosphatidylethanolamine, phosphatidylinositol and phosphatidylserine. With DHDDS, forms the dehydrodolichyl diphosphate synthase (DDS) complex, an essential component of the dolichol monophosphate (Dol-P) biosynthetic machinery. Both subunits contribute to enzymatic activity, i.e. condensation of multiple copies of isopentenyl pyrophosphate (IPP) to farnesyl pyrophosphate (FPP) to produce dehydrodolichyl diphosphate (Dedol-PP), a precursor of dolichol phosphate which is utilized as a sugar carrier in protein glycosylation in the endoplasmic reticulum (ER). Synthesizes long-chain polyprenols, mostly of C95 and C100 chain length. Regulates the glycosylation and stability of nascent NPC2, thereby promoting trafficking of LDL-derived cholesterol. Acts as a specific receptor for the N-terminus of Nogo-B, a neural and cardiovascular regulator. The sequence is that of Dehydrodolichyl diphosphate synthase complex subunit NUS1 from Homo sapiens (Human).